A 123-amino-acid chain; its full sequence is Large ribosomal subunit protein uL14 (123 aa).

The protein belongs to the universal ribosomal protein uL14 family. Part of the 50S ribosomal subunit. Forms a cluster with proteins L3 and L19. In the 70S ribosome, L14 and L19 interact and together make contacts with the 16S rRNA in bridges B5 and B8.

In terms of biological role, binds to 23S rRNA. Forms part of two intersubunit bridges in the 70S ribosome. This is Large ribosomal subunit protein uL14 from Citrobacter koseri (strain ATCC BAA-895 / CDC 4225-83 / SGSC4696).